Consider the following 151-residue polypeptide: Cytochrome c-type biogenesis protein CcmE (151 aa).

Over 1–9 (MKGLKKKRR) the chain is Cytoplasmic. The helical; Signal-anchor for type II membrane protein transmembrane segment at 10 to 30 (IQIITLAFVALAGSTALIGYA) threads the bilayer. The Periplasmic segment spans residues 31–151 (MRDGINFFRS…FQHTEDQPQG (121 aa)). Residues His123 and Tyr127 each contribute to the heme site.

This sequence belongs to the CcmE/CycJ family.

Its subcellular location is the cell inner membrane. In terms of biological role, heme chaperone required for the biogenesis of c-type cytochromes. Transiently binds heme delivered by CcmC and transfers the heme to apo-cytochromes in a process facilitated by CcmF and CcmH. The chain is Cytochrome c-type biogenesis protein CcmE from Cereibacter sphaeroides (strain ATCC 17025 / ATH 2.4.3) (Rhodobacter sphaeroides).